We begin with the raw amino-acid sequence, 377 residues long: uncharacterized protein (377 aa).

Positions 345-377 (VGPSPPAYEQVARSSPTDIPLPPPSCPTNVQRD) are disordered.

This is an uncharacterized protein from Schizosaccharomyces pombe (strain 972 / ATCC 24843) (Fission yeast).